A 95-amino-acid polypeptide reads, in one-letter code: Secreted RxLR effector protein 20 (95 aa).

The first 20 residues, 1 to 20 (MQSPYIILFALVTLLGSISG), serve as a signal peptide directing secretion. Positions 47 to 50 (RLLR) match the RxLR motif.

This sequence belongs to the RxLR effector family.

It is found in the secreted. The protein localises to the host nucleus. The protein resides in the host cytoplasm. Secreted effector that partially suppresses the host cell death induced by cell death-inducing proteins. The sequence is that of Secreted RxLR effector protein 20 from Plasmopara viticola (Downy mildew of grapevine).